Here is a 126-residue protein sequence, read N- to C-terminus: Large ribosomal subunit protein bL12 (126 aa).

The segment at 97-126 is disordered; that stretch reads PQPVKSGVSKEEAEEAKKQLAESGAEVEVK. Over residues 104–116 the composition is skewed to basic and acidic residues; sequence VSKEEAEEAKKQL.

The protein belongs to the bacterial ribosomal protein bL12 family. As to quaternary structure, homodimer. Part of the ribosomal stalk of the 50S ribosomal subunit. Forms a multimeric L10(L12)X complex, where L10 forms an elongated spine to which 2 to 4 L12 dimers bind in a sequential fashion. Binds GTP-bound translation factors.

Forms part of the ribosomal stalk which helps the ribosome interact with GTP-bound translation factors. Is thus essential for accurate translation. The chain is Large ribosomal subunit protein bL12 from Geotalea uraniireducens (strain Rf4) (Geobacter uraniireducens).